A 244-amino-acid polypeptide reads, in one-letter code: Type III pantothenate kinase (244 aa).

6-13 (DVGNTRIK) contributes to the ATP binding site. Substrate contacts are provided by residues Tyr87 and 94–97 (GIDR). Catalysis depends on Asp96, which acts as the Proton acceptor. Asp117 lines the K(+) pocket. Thr120 contributes to the ATP binding site. Thr172 contacts substrate.

It belongs to the type III pantothenate kinase family. In terms of assembly, homodimer. The cofactor is NH4(+). K(+) serves as cofactor.

Its subcellular location is the cytoplasm. The catalysed reaction is (R)-pantothenate + ATP = (R)-4'-phosphopantothenate + ADP + H(+). It participates in cofactor biosynthesis; coenzyme A biosynthesis; CoA from (R)-pantothenate: step 1/5. In terms of biological role, catalyzes the phosphorylation of pantothenate (Pan), the first step in CoA biosynthesis. The polypeptide is Type III pantothenate kinase (Flavobacterium johnsoniae (strain ATCC 17061 / DSM 2064 / JCM 8514 / BCRC 14874 / CCUG 350202 / NBRC 14942 / NCIMB 11054 / UW101) (Cytophaga johnsonae)).